The following is a 113-amino-acid chain: Hydrogenase maturation factor HypA (113 aa).

Histidine 2 contributes to the Ni(2+) binding site. Positions 73, 76, 89, and 92 each coordinate Zn(2+).

This sequence belongs to the HypA/HybF family.

Functionally, involved in the maturation of [NiFe] hydrogenases. Required for nickel insertion into the metal center of the hydrogenase. The chain is Hydrogenase maturation factor HypA from Rhodopseudomonas palustris (strain TIE-1).